The chain runs to 506 residues: Histone acetyltransferase esa-1 (506 aa).

Positions Met-1–Asp-24 are disordered. Residues Ile-26–Asp-78 enclose the Tudor-knot domain. The segment at Asp-82–Asn-215 is disordered. Residues Asn-87–Thr-98 show a composition bias toward basic and acidic residues. A compositionally biased stretch (basic residues) spans Gln-109–Ser-120. Basic and acidic residues predominate over residues Gly-167 to Glu-178. An MYST-type HAT domain is found at Ser-220–Pro-494. The C2HC MYST-type zinc-finger motif lies at Ile-253 to Leu-278. The ESA1-RPD3 motif signature appears at Arg-303–Tyr-324. N6-acetyllysine; by autocatalysis is present on Lys-320. Residues Ala-361–Thr-365 and Gln-370–Arg-376 contribute to the acetyl-CoA site. Glu-396 (proton donor/acceptor) is an active-site residue. Ser-400 lines the acetyl-CoA pocket.

Belongs to the MYST (SAS/MOZ) family. Component of the NuA4 histone acetyltransferase complex. In terms of processing, autoacetylation at Lys-320 is required for proper function.

It is found in the nucleus. The protein resides in the chromosome. It catalyses the reaction L-lysyl-[histone] + acetyl-CoA = N(6)-acetyl-L-lysyl-[histone] + CoA + H(+). The enzyme catalyses L-lysyl-[protein] + acetyl-CoA = N(6)-acetyl-L-lysyl-[protein] + CoA + H(+). The catalysed reaction is 2-hydroxyisobutanoyl-CoA + L-lysyl-[protein] = N(6)-(2-hydroxyisobutanoyl)-L-lysyl-[protein] + CoA + H(+). It carries out the reaction (2E)-butenoyl-CoA + L-lysyl-[protein] = N(6)-(2E)-butenoyl-L-lysyl-[protein] + CoA + H(+). Catalytic component of the NuA4 histone acetyltransferase (HAT) complex which is involved in epigenetic transcriptional activation of selected genes principally by acetylation of nucleosomal histones H4, H3, H2B, H2A and H2A variant H2A.Z. Acetylates histone H4 to form H4K5ac, H4K8ac, H4K12ac and H4K16ac, histone H3 to form H3K14ac, and histone H2A to form H2AK4ac and H2AK7ac. The NuA4 complex is involved in the DNA damage response and is required for chromosome segregation. The NuA4 complex plays a direct role in repair of DNA double-strand breaks (DSBs) through homologous recombination. Recruitment to promoters depends on H3K4me. Also acetylates non-histone proteins. In addition to protein acetyltransferase, can use different acyl-CoA substrates, such as 2-hydroxyisobutanoyl-CoA (2-hydroxyisobutyryl-CoA) or (2E)-butenoyl-CoA (crotonyl-CoA), and is able to mediate protein 2-hydroxyisobutyrylation and crotonylation, respectively. In Neurospora crassa (strain ATCC 24698 / 74-OR23-1A / CBS 708.71 / DSM 1257 / FGSC 987), this protein is Histone acetyltransferase esa-1 (esa-1).